The sequence spans 527 residues: Transcription factor RBF1 (527 aa).

Disordered stretches follow at residues 1-36 (MSSN…IGAS), 258-281 (ANLY…HNEE), 328-365 (HHLL…QQAA), 395-433 (QLSQ…HGLD), and 470-527 (TQGN…SGFL). A DNA-binding region spans residues 160–300 (HVRDALTTDE…LRMINPQHNH (141 aa)). Residues 263 to 281 (NEKDQKRKNKPDEPGHNEE) are compositionally biased toward basic and acidic residues. Composition is skewed to low complexity over residues 332–365 (QQEQ…QQAA) and 395–428 (QLSQ…PQQT).

It belongs to the RBF1 family.

It is found in the nucleus. The protein localises to the chromosome. Its subcellular location is the telomere. Transcriptional activator that binds to the RPG box and to telomeres. Involved in the regulation of the transition between yeast and filamentous forms and plays a role in virulence. Induces expression of HWP1, a major hyphal cell protein and virulence factor. The polypeptide is Transcription factor RBF1 (RBF1) (Candida albicans (Yeast)).